The chain runs to 177 residues: Adenine phosphoribosyltransferase (177 aa).

It belongs to the purine/pyrimidine phosphoribosyltransferase family. Homodimer.

It localises to the cytoplasm. It carries out the reaction AMP + diphosphate = 5-phospho-alpha-D-ribose 1-diphosphate + adenine. It participates in purine metabolism; AMP biosynthesis via salvage pathway; AMP from adenine: step 1/1. Functionally, catalyzes a salvage reaction resulting in the formation of AMP, that is energically less costly than de novo synthesis. This is Adenine phosphoribosyltransferase from Chlorobium luteolum (strain DSM 273 / BCRC 81028 / 2530) (Pelodictyon luteolum).